The primary structure comprises 111 residues: Universal stress protein B (111 aa).

A run of 2 helical transmembrane segments spans residues 1–21 (MINT…NMLR) and 90–110 (FILT…LMLW).

It belongs to the universal stress protein B family.

It localises to the cell inner membrane. This Edwardsiella ictaluri (strain 93-146) protein is Universal stress protein B.